The following is a 195-amino-acid chain: MTFALPDNATLSLFLLPLLVFFARIIDVSIGTLRIIFVARSLKGWAGVLGFFESLIWVLAISQVMQNLTNVWTYIAFALGFATGNYVGVLIEERIAIGSLIVRIITRKDATVLTEHLWKAGYGVTNLQAHGETGPVRLIFTVCRRRDVKDVLRMVKQFNPRAFYTIEDVRFVQDNLPVVPRRHGIMSRLALRNRK.

3 helical membrane-spanning segments follow: residues 13-33 (LFLLPLLVFFARIIDVSIGTL), 45-65 (WAGVLGFFESLIWVLAISQVM), and 71-91 (VWTYIAFALGFATGNYVGVLI).

Belongs to the UPF0316 family.

The protein localises to the cell membrane. The sequence is that of UPF0316 protein Pcar_2434 from Syntrophotalea carbinolica (strain DSM 2380 / NBRC 103641 / GraBd1) (Pelobacter carbinolicus).